Here is a 64-residue protein sequence, read N- to C-terminus: Temporin-ALd (64 aa).

Residues 1-22 (MFTMKKSLLLLFFLGTIHLSLC) form the signal peptide. Residues 23-46 (EQERNAEEERRDDLGERQAEVEKR) constitute a propeptide that is removed on maturation. The residue at position 62 (Leu-62) is a Leucine amide.

As to expression, expressed by the skin glands.

The protein localises to the secreted. Its function is as follows. Antimicrobial peptide with activity against Gram-positive and Gram-negative bacteria and against fungi. Has been tested against S.aureus (MIC=1.25 ug/mL), B.pumilus (MIC=2.5 ug/mL), B.cereus (MIC=15.0 ug/mL), E.coli (MIC=1.25 ug/mL), B.dysenteriae (MIC=5.0 ug/mL), A.cacoaceticus (MIC=15.0 ug/mL), P.aeruginosa (MIC=5.0 ug/mL) and C.albicans (MIC=1.25 ug/mL). Also shows a weak hemolytic activity. This is Temporin-ALd from Amolops loloensis (Lolokou Sucker Frog).